The primary structure comprises 88 residues: RNA-binding protein Hfq (88 aa).

Positions 9-68 (DPFLNALRRERIPVSIYLVNGIKLQGQIESFDQFVILLKNTVNQMVYKHAISTVVPARAV) constitute a Sm domain. The disordered stretch occupies residues 66–88 (RAVSHHSASDRPQGERPQEKTEE). Residues 72 to 88 (SASDRPQGERPQEKTEE) show a composition bias toward basic and acidic residues.

The protein belongs to the Hfq family. As to quaternary structure, homohexamer.

In terms of biological role, RNA chaperone that binds small regulatory RNA (sRNAs) and mRNAs to facilitate mRNA translational regulation in response to envelope stress, environmental stress and changes in metabolite concentrations. Also binds with high specificity to tRNAs. The chain is RNA-binding protein Hfq from Aliivibrio fischeri (strain ATCC 700601 / ES114) (Vibrio fischeri).